We begin with the raw amino-acid sequence, 730 residues long: Synaptogenesis protein syg-1 (730 aa).

Positions 1–18 (MVRWQTWPLLLLFQLVTC) are cleaved as a signal peptide. The Extracellular portion of the chain corresponds to 19 to 551 (QQLQQRIVEA…WIVITAKFDR (533 aa)). 5 Ig-like domains span residues 23 to 123 (QRIV…AKLT), 131 to 265 (PKIV…VKLS), 270 to 352 (PQIN…IKLN), 357 to 433 (ARIM…QILS), and 441 to 540 (PPTV…RNIL). Cystine bridges form between Cys44-Cys104, Cys152-Cys246, Cys292-Cys336, Cys378-Cys420, and Cys462-Cys519. 2 N-linked (GlcNAc...) asparagine glycosylation sites follow: Asn93 and Asn206. A helical transmembrane segment spans residues 552–572 (MVALAIISAGVLLVSLLCCLC). Residues 573–730 (MCRSNCRSRK…RPISRTSTHV (158 aa)) are Cytoplasmic-facing.

Belongs to the immunoglobulin superfamily. In terms of assembly, interacts with skr-1. Interacts with syg-2. Interacts with the WAVE regulatory complex; the interaction leads to formation of a synaptic F-actin network that is required for synapse formation and axon branching. In terms of tissue distribution, expression in head motor neurons, occasionally in HSN neurons and weakly in other cells in the vulval region. Expressed in the primary synapse region of HSNL motor neuron.

It localises to the cell membrane. It is found in the cell projection. Its subcellular location is the axon. The protein resides in the synapse. Functionally, cell adhesion protein. Involved in synapse formation in the HSNL egg-laying motor neuron. Inhibits assembly of the SCF(sel-10) E3 ubiquitin ligase complex at synapses, and protects them from elimination. Also required for F-actin assembly at the synaptic region and for axon branch formation. The sequence is that of Synaptogenesis protein syg-1 from Caenorhabditis elegans.